A 422-amino-acid chain; its full sequence is Succinate--CoA ligase [ADP-forming] subunit beta, mitochondrial (422 aa).

Residues 1–27 (MVRGSLGKLASRALSVAGKWQHQQLRR) constitute a mitochondrion transit peptide. The region spanning 36-279 (AELMGKYGIN…TTQEDPREVA (244 aa)) is the ATP-grasp domain. Residues Lys75, 82-84 (GRG), and Glu142 contribute to the ATP site. Residues Asn234 and Asp248 each coordinate Mg(2+). Residues Asn299 and 356–358 (GIM) each bind substrate.

It belongs to the succinate/malate CoA ligase beta subunit family. As to quaternary structure, heterodimer of an alpha and a beta subunit. Requires Mg(2+) as cofactor.

The protein resides in the mitochondrion. The enzyme catalyses succinate + ATP + CoA = succinyl-CoA + ADP + phosphate. Its pathway is carbohydrate metabolism; tricarboxylic acid cycle; succinate from succinyl-CoA (ligase route): step 1/1. In terms of biological role, succinyl-CoA synthetase functions in the citric acid cycle (TCA), coupling the hydrolysis of succinyl-CoA to the synthesis of ATP and thus represents the only step of substrate-level phosphorylation in the TCA. The beta subunit provides nucleotide specificity of the enzyme and binds the substrate succinate, while the binding sites for coenzyme A and phosphate are found in the alpha subunit. In Oryza sativa subsp. japonica (Rice), this protein is Succinate--CoA ligase [ADP-forming] subunit beta, mitochondrial.